Reading from the N-terminus, the 130-residue chain is Small ribosomal subunit protein uS9 (130 aa).

It belongs to the universal ribosomal protein uS9 family.

The chain is Small ribosomal subunit protein uS9 from Caldicellulosiruptor saccharolyticus (strain ATCC 43494 / DSM 8903 / Tp8T 6331).